The chain runs to 306 residues: Metal ABC transporter substrate-binding lipoprotein SloC (306 aa).

Residues methionine 1–alanine 19 form the signal peptide. A lipid anchor (N-palmitoyl cysteine) is attached at cysteine 20. Cysteine 20 carries S-diacylglycerol cysteine lipidation. A divalent metal cation-binding residues include histidine 64, histidine 136, glutamate 202, and aspartate 277.

It belongs to the bacterial solute-binding protein 9 family. Lipoprotein receptor antigen (Lrai) subfamily.

The protein localises to the cell membrane. Functionally, part of the ATP-binding cassette (ABC) transport system SloABC involved in metal import. Binds a metal with high affinity and specificity and delivers it to the membrane permease for translocation into the cytoplasm. May act as an adhesin which is involved on adherence to extracellular matrix. It is an important factor in pathogenesis and infection. May contribute to the formation and accumulation of dental plaque. The chain is Metal ABC transporter substrate-binding lipoprotein SloC (sloC) from Streptococcus mutans serotype c (strain ATCC 700610 / UA159).